Reading from the N-terminus, the 352-residue chain is MAPLGYFLLLCSLKQALGSYPIWWSLAVGPQYSSLGSQPILCASIPGLVPKQLRFCRNYVEIMPSVAEGIKIGIQECQHQFRGRRWNCTTVHDSLAIFGPVLDKATRESAFVHAIASAGVAFAVTRSCAEGTAAICGCSSRHQGSPGKGWKWGGCSEDIEFGGMVSREFADARENRPDARSAMNRHNNEAGRQAIASHMHLKCKCHGLSGSCEVKTCWWSQPDFRAIGDFLKDKYDSASEMVVEKHRESRGWVETLRPRYTYFKVPTERDLVYYEASPNFCEPNPETGSFGTRDRTCNVSSHGIDGCDLLCCGRGHNARAERRREKCRCVFHWCCYVSCQECTRVYDVHTCK.

The first 18 residues, 1 to 18 (MAPLGYFLLLCSLKQALG), serve as a signal peptide directing secretion. Intrachain disulfides connect cysteine 77-cysteine 88, cysteine 128-cysteine 136, cysteine 138-cysteine 155, cysteine 203-cysteine 217, cysteine 205-cysteine 212, cysteine 281-cysteine 312, cysteine 297-cysteine 307, cysteine 311-cysteine 351, cysteine 327-cysteine 342, cysteine 329-cysteine 339, and cysteine 334-cysteine 335. An N-linked (GlcNAc...) asparagine glycan is attached at asparagine 87. Serine 209 carries the O-palmitoleoyl serine; by PORCN lipid modification. Residue asparagine 298 is glycosylated (N-linked (GlcNAc...) asparagine).

This sequence belongs to the Wnt family. Forms a soluble 1:1 complex with AFM; this prevents oligomerization and is required for prolonged biological activity. The complex with AFM may represent the physiological form in body fluids. Homooligomer; disulfide-linked, leading to inactivation. Interacts with PORCN. Interacts with APCDD1 and WLS. Component of the Wnt-Fzd-LRP5-LRP6 signaling complex that contains a WNT protein, a FZD protein and LRP5 or LRP6. Interacts directly in the complex with LRP6. Interacts with glypican GPC3. Interacts with PKD1 (via extracellular domain). Interacts with FZD5. In terms of processing, palmitoleoylation by PORCN is required for efficient binding to frizzled receptors. Palmitoleoylation is required for proper trafficking to cell surface, vacuolar acidification is critical to release palmitoleoylated WNT3A from WLS in secretory vesicles. Depalmitoleoylated by NOTUM, leading to inhibit Wnt signaling pathway, possibly by promoting disulfide bond formation and oligomerization. Proteolytic processing by TIKI1 and TIKI2 promotes oxidation and formation of large disulfide-bond oligomers, leading to inactivation of WNT3A. Post-translationally, disulfide bonds have critical and distinct roles in secretion and activity. Loss of each conserved cysteine in WNT3A results in high molecular weight oxidized Wnt oligomers, which are formed through inter-Wnt disulfide bonding. Moderately expressed in placenta and at low levels in adult lung, spleen, and prostate.

The protein localises to the secreted. It is found in the extracellular space. Its subcellular location is the extracellular matrix. Functionally, ligand for members of the frizzled family of seven transmembrane receptors. Functions in the canonical Wnt signaling pathway that results in activation of transcription factors of the TCF/LEF family. Required for normal embryonic mesoderm development and formation of caudal somites. Required for normal morphogenesis of the developing neural tube. Mediates self-renewal of the stem cells at the bottom on intestinal crypts (in vitro). The chain is Protein Wnt-3a (WNT3A) from Homo sapiens (Human).